A 442-amino-acid polypeptide reads, in one-letter code: Na(+)/H(+) antiporter NhaA (442 aa).

A run of 11 helical transmembrane segments spans residues 32-52 (IGGG…NSPW), 73-93 (LTLA…VAGL), 111-131 (AVPV…YALV), 139-159 (AGWA…LAVI), 170-190 (FLLT…AVVY), 193-213 (HLSI…TLLV), 234-254 (VHAS…AVPV), 284-304 (VAVP…LSGL), 316-336 (VVLG…FLVA), 352-372 (VLGL…IGEL), and 383-403 (HVKI…AVVL). Residues 423–435 (HDGIPDVYQDLHR) are compositionally biased toward basic and acidic residues. The segment at 423-442 (HDGIPDVYQDLHRSSPRPWG) is disordered.

This sequence belongs to the NhaA Na(+)/H(+) (TC 2.A.33) antiporter family.

It localises to the cell membrane. It catalyses the reaction Na(+)(in) + 2 H(+)(out) = Na(+)(out) + 2 H(+)(in). In terms of biological role, na(+)/H(+) antiporter that extrudes sodium in exchange for external protons. This is Na(+)/H(+) antiporter NhaA from Frankia casuarinae (strain DSM 45818 / CECT 9043 / HFP020203 / CcI3).